We begin with the raw amino-acid sequence, 670 residues long: Cyclic AMP-dependent transcription factor ATF-6 alpha (670 aa).

Residues Met1–Glu150 form a transcription activation region. Residues Met1–Arg377 are Cytoplasmic-facing. A Glycyl lysine isopeptide (Lys-Gly) (interchain with G-Cter in SUMO2) cross-link involves residue Lys87. The disordered stretch occupies residues Gln91–Pro183. Composition is skewed to low complexity over residues Ser94–Ser113 and Leu123–Leu134. A Glycyl lysine isopeptide (Lys-Gly) (interchain with G-Cter in ubiquitin) cross-link involves residue Lys152. The region spanning Val306–Leu369 is the bZIP domain. A basic motif region spans residues Arg308–Lys339. Positions Leu348 to Leu355 are leucine-zipper. Residues Val378–Leu398 traverse the membrane as a helical; Signal-anchor for type II membrane protein segment. The Lumenal portion of the chain corresponds to Glu399–Gln670. The segment at Gln468 to Pro589 is interaction with THBS4. Asn472, Asn584, and Asn643 each carry an N-linked (GlcNAc...) asparagine glycan.

Belongs to the bZIP family. ATF subfamily. As to quaternary structure, interacts with XBP1 isoform 2; the interaction occurs in a ER stress-dependent manner. Interacts with LACC1. In terms of assembly, interacts with THBS4 (via EGF-like 3; calcium-binding domain) which facilitates its processing, activation and nuclear translocation. Interacts (via lumenal domain) with THBS1. Homodimer and heterodimer with ATF6-beta. The dimer interacts with the nuclear transcription factor Y (NF-Y) trimer through direct binding to NF-Y subunit C (NF-YC). Also interacts with the transcription factors GTF2I, YY1 and SRF. During unfolded protein response, a fragment of approximately 50 kDa containing the cytoplasmic transcription factor domain is released by proteolysis. The cleavage seems to be performed sequentially by site-1 (MBTPS1, S1P) and site-2 (MBTPS2, S2P) proteases. In terms of processing, N-glycosylated; in its luminal domain. The glycosylation status may serve as a sensor for ER homeostasis, resulting in ATF6 activation to trigger the unfolded protein response (UPR). Post-translationally, ubiquitinated by RNF186 at Lys-152, which is required for pattern recognition receptor-induced unfolded protein response-associated outcomes. As to expression, ubiquitous.

The protein localises to the endoplasmic reticulum membrane. Its subcellular location is the golgi apparatus membrane. It is found in the nucleus. Precursor of the transcription factor form (Processed cyclic AMP-dependent transcription factor ATF-6 alpha), which is embedded in the endoplasmic reticulum membrane. Endoplasmic reticulum stress promotes processing of this form, releasing the transcription factor form that translocates into the nucleus, where it activates transcription of genes involved in the unfolded protein response (UPR). Functionally, transcription factor that initiates the unfolded protein response (UPR) during endoplasmic reticulum stress by activating transcription of genes involved in the UPR. Binds DNA on the 5'-CCAC[GA]-3'half of the ER stress response element (ERSE) (5'-CCAAT-N(9)-CCAC[GA]-3') and of ERSE II (5'-ATTGG-N-CCACG-3'). Binding to ERSE requires binding of NF-Y to ERSE. Could also be involved in activation of transcription by the serum response factor. May play a role in foveal development and cone function in the retina. This Homo sapiens (Human) protein is Cyclic AMP-dependent transcription factor ATF-6 alpha (ATF6).